We begin with the raw amino-acid sequence, 440 residues long: Exosome complex component RRP45 (440 aa).

S65 is modified (phosphoserine). N6-acetyllysine; alternate is present on K297. A Glycyl lysine isopeptide (Lys-Gly) (interchain with G-Cter in SUMO1); alternate cross-link involves residue K297. A Glycyl lysine isopeptide (Lys-Gly) (interchain with G-Cter in SUMO2); alternate cross-link involves residue K297. A phosphoserine mark is found at S306 and S346. The interval 341 to 362 (EGIENSWGHLEDSEKEDEDEGG) is disordered. Over residues 353–362 (SEKEDEDEGG) the composition is skewed to acidic residues. Phosphoserine occurs at positions 393 and 395. The tract at residues 404 to 440 (EPDKNPKKIRTQTISATQVKAPSKKPVKKRKKKRAAN) is disordered. The segment covering 425–440 (PSKKPVKKRKKKRAAN) has biased composition (basic residues).

It belongs to the RNase PH family. In terms of assembly, component of the RNA exosome core complex (Exo-9), composed of EXOSC1, EXOSC2, EXOSC3, EXOSC4, EXOSC5, EXOSC6, EXOSC7, EXOSC8 and EXOSC9; within the complex interacts with EXOSC3, EXOSC4, EXOSC5 and DIS3. The catalytically inactive RNA exosome core complex (Exo-9) associates with the catalytic subunit EXOSC10/RRP6. Exo-9 may associate with DIS3 to form the nucleolar exosome complex, or DIS3L to form the cytoplasmic exosome complex. Exo-9 is formed by a hexameric base ring consisting of the heterodimers EXOSC4-EXOSC9, EXOSC5-EXOSC8 and EXOSC6-EXOSC7, and a cap ring consisting of EXOSC1, EXOSC2 and EXOSC3. The RNA exosome complex associates with cofactors C1D/RRP47, MPHOSPH6/MPP6 and MTREX/MTR4. Interacts (via C-terminus region) with SETX (via N-terminus domain); the interaction enhances SETX sumoylation. Interacts with DIS3; the interaction is direct.

The protein resides in the cytoplasm. Its subcellular location is the nucleus. It localises to the nucleolus. It is found in the nucleoplasm. In terms of biological role, non-catalytic component of the RNA exosome complex which has 3'-&gt;5' exoribonuclease activity and participates in a multitude of cellular RNA processing and degradation events. In the nucleus, the RNA exosome complex is involved in proper maturation of stable RNA species such as rRNA, snRNA and snoRNA, in the elimination of RNA processing by-products and non-coding 'pervasive' transcripts, such as antisense RNA species and promoter-upstream transcripts (PROMPTs), and of mRNAs with processing defects, thereby limiting or excluding their export to the cytoplasm. The RNA exosome may be involved in Ig class switch recombination (CSR) and/or Ig variable region somatic hypermutation (SHM) by targeting AICDA deamination activity to transcribed dsDNA substrates. In the cytoplasm, the RNA exosome complex is involved in general mRNA turnover and specifically degrades inherently unstable mRNAs containing AU-rich elements (AREs) within their 3' untranslated regions, and in RNA surveillance pathways, preventing translation of aberrant mRNAs. It seems to be involved in degradation of histone mRNA. The catalytic inactive RNA exosome core complex of 9 subunits (Exo-9) is proposed to play a pivotal role in the binding and presentation of RNA for ribonucleolysis, and to serve as a scaffold for the association with catalytic subunits and accessory proteins or complexes. EXOSC9 binds to ARE-containing RNAs. The chain is Exosome complex component RRP45 (EXOSC9) from Bos taurus (Bovine).